The sequence spans 731 residues: 1,4-alpha-glucan branching enzyme GlgB (731 aa).

Aspartate 412 serves as the catalytic Nucleophile. The active-site Proton donor is glutamate 465.

It belongs to the glycosyl hydrolase 13 family. GlgB subfamily. In terms of assembly, monomer.

It carries out the reaction Transfers a segment of a (1-&gt;4)-alpha-D-glucan chain to a primary hydroxy group in a similar glucan chain.. It functions in the pathway glycan biosynthesis; glycogen biosynthesis. Functionally, catalyzes the formation of the alpha-1,6-glucosidic linkages in glycogen by scission of a 1,4-alpha-linked oligosaccharide from growing alpha-1,4-glucan chains and the subsequent attachment of the oligosaccharide to the alpha-1,6 position. The sequence is that of 1,4-alpha-glucan branching enzyme GlgB from Bordetella bronchiseptica (strain ATCC BAA-588 / NCTC 13252 / RB50) (Alcaligenes bronchisepticus).